Consider the following 274-residue polypeptide: ATP synthase subunit a (274 aa).

5 helical membrane-spanning segments follow: residues threonine 43–phenylalanine 63, valine 103–leucine 123, aspartate 149–isoleucine 169, leucine 223–proline 243, and alanine 245–valine 265.

This sequence belongs to the ATPase A chain family. In terms of assembly, F-type ATPases have 2 components, CF(1) - the catalytic core - and CF(0) - the membrane proton channel. CF(1) has five subunits: alpha(3), beta(3), gamma(1), delta(1), epsilon(1). CF(0) has three main subunits: a(1), b(2) and c(9-12). The alpha and beta chains form an alternating ring which encloses part of the gamma chain. CF(1) is attached to CF(0) by a central stalk formed by the gamma and epsilon chains, while a peripheral stalk is formed by the delta and b chains.

It localises to the cell inner membrane. In terms of biological role, key component of the proton channel; it plays a direct role in the translocation of protons across the membrane. The chain is ATP synthase subunit a from Yersinia enterocolitica serotype O:8 / biotype 1B (strain NCTC 13174 / 8081).